Consider the following 617-residue polypeptide: mRNA-decapping enzyme 1B (617 aa).

Residue alanine 2 is modified to N-acetylalanine. Serine 147 carries the post-translational modification Phosphoserine. Tyrosine 191 bears the Phosphotyrosine mark. 2 disordered regions span residues 195–222 and 243–266; these read NLIK…LDPE and TVEP…KLPI. Polar residues predominate over residues 205 to 219; it reads SENQQQRIPQPNQTL. Low complexity predominate over residues 252 to 261; that stretch reads QQQQQQQQQQ. Phosphoserine occurs at positions 275 and 336. A disordered region spans residues 362–426; the sequence is TPGAANKCDP…VGHQAHGREQ (65 aa). A compositionally biased stretch (low complexity) spans 371–381; that stretch reads PSTPAPASSAA. The residue at position 392 (threonine 392) is a Phosphothreonine. Phosphoserine occurs at positions 448 and 511.

Belongs to the DCP1 family. In terms of assembly, interacts with DCP1A. (Microbial infection) Interacts with rotavirus A non-structural protein 2; this interaction probably plays a role in the sequestration of DCP1B in viral factories. Interacts with rotavirus A non-structural protein 5; this interaction probably plays a role in its sequestration in viral factories.

It localises to the cytoplasm. It is found in the nucleus. It catalyses the reaction a 5'-end (N(7)-methyl 5'-triphosphoguanosine)-ribonucleoside in mRNA + H2O = N(7)-methyl-GDP + a 5'-end phospho-ribonucleoside in mRNA + 2 H(+). Its function is as follows. May play a role in the degradation of mRNAs, both in normal mRNA turnover and in nonsense-mediated mRNA decay. May remove the 7-methyl guanine cap structure from mRNA molecules, yielding a 5'-phosphorylated mRNA fragment and 7m-GDP. The polypeptide is mRNA-decapping enzyme 1B (DCP1B) (Homo sapiens (Human)).